The chain runs to 255 residues: Uridylate kinase (255 aa).

22–25 (KLSG) lines the ATP pocket. The segment at 30-35 (GNGGYG) is involved in allosteric activation by GTP. G64 is a binding site for UMP. ATP-binding residues include G65 and R69. Residues D85 and 146 to 153 (TGNPFFTT) contribute to the UMP site. Residues N174, Y180, and D183 each coordinate ATP.

Belongs to the UMP kinase family. Homohexamer.

The protein resides in the cytoplasm. The enzyme catalyses UMP + ATP = UDP + ADP. It participates in pyrimidine metabolism; CTP biosynthesis via de novo pathway; UDP from UMP (UMPK route): step 1/1. Allosterically activated by GTP. Inhibited by UTP. Functionally, catalyzes the reversible phosphorylation of UMP to UDP. The sequence is that of Uridylate kinase from Rubrobacter xylanophilus (strain DSM 9941 / JCM 11954 / NBRC 16129 / PRD-1).